Reading from the N-terminus, the 118-residue chain is UPF0251 protein Teth39_0655 (118 aa).

The protein belongs to the UPF0251 family.

The protein is UPF0251 protein Teth39_0655 of Thermoanaerobacter pseudethanolicus (strain ATCC 33223 / 39E) (Clostridium thermohydrosulfuricum).